The primary structure comprises 138 residues: Large ribosomal subunit protein uL16 (138 aa).

A compositionally biased stretch (basic residues) spans Met1–Gln13. The segment at Met1–Ile20 is disordered.

Belongs to the universal ribosomal protein uL16 family. Part of the 50S ribosomal subunit.

In terms of biological role, binds 23S rRNA and is also seen to make contacts with the A and possibly P site tRNAs. In Burkholderia mallei (strain NCTC 10247), this protein is Large ribosomal subunit protein uL16.